The sequence spans 328 residues: Beta-ketoacyl-[acyl-carrier-protein] synthase III (328 aa).

Active-site residues include Cys113 and His253. The ACP-binding stretch occupies residues 254 to 258 (QANLR). Residue Asn283 is part of the active site.

The protein belongs to the thiolase-like superfamily. FabH family. Homodimer.

The protein localises to the cytoplasm. The catalysed reaction is malonyl-[ACP] + acetyl-CoA + H(+) = 3-oxobutanoyl-[ACP] + CO2 + CoA. It functions in the pathway lipid metabolism; fatty acid biosynthesis. Its function is as follows. Catalyzes the condensation reaction of fatty acid synthesis by the addition to an acyl acceptor of two carbons from malonyl-ACP. Catalyzes the first condensation reaction which initiates fatty acid synthesis and may therefore play a role in governing the total rate of fatty acid production. Possesses both acetoacetyl-ACP synthase and acetyl transacylase activities. Its substrate specificity determines the biosynthesis of branched-chain and/or straight-chain of fatty acids. The protein is Beta-ketoacyl-[acyl-carrier-protein] synthase III of Fusobacterium nucleatum subsp. nucleatum (strain ATCC 25586 / DSM 15643 / BCRC 10681 / CIP 101130 / JCM 8532 / KCTC 2640 / LMG 13131 / VPI 4355).